Reading from the N-terminus, the 116-residue chain is UPF0122 protein CA_C1753 (116 aa).

This sequence belongs to the UPF0122 family.

Its function is as follows. Might take part in the signal recognition particle (SRP) pathway. This is inferred from the conservation of its genetic proximity to ftsY/ffh. May be a regulatory protein. This chain is UPF0122 protein CA_C1753, found in Clostridium acetobutylicum (strain ATCC 824 / DSM 792 / JCM 1419 / IAM 19013 / LMG 5710 / NBRC 13948 / NRRL B-527 / VKM B-1787 / 2291 / W).